The primary structure comprises 264 residues: Glutamate racemase (264 aa).

Residues 10-11 and 42-43 each bind substrate; these read DS and YG. The active-site Proton donor/acceptor is C73. 74 to 75 contacts substrate; sequence NT. C183 acts as the Proton donor/acceptor in catalysis. 184–185 lines the substrate pocket; it reads TH.

The protein belongs to the aspartate/glutamate racemases family.

The enzyme catalyses L-glutamate = D-glutamate. The protein operates within cell wall biogenesis; peptidoglycan biosynthesis. Provides the (R)-glutamate required for cell wall biosynthesis. The chain is Glutamate racemase from Streptococcus sanguinis (strain SK36).